We begin with the raw amino-acid sequence, 283 residues long: Thymidylate synthase (283 aa).

DUMP-binding positions include R31 and 145–146 (RR). C165 acts as the Nucleophile in catalysis. Residues 185–188 (RSAD), N196, and 226–228 (HIY) each bind dUMP. Position 188 (D188) interacts with (6R)-5,10-methylene-5,6,7,8-tetrahydrofolate. S282 contacts (6R)-5,10-methylene-5,6,7,8-tetrahydrofolate.

This sequence belongs to the thymidylate synthase family. Bacterial-type ThyA subfamily. As to quaternary structure, homodimer.

The protein localises to the cytoplasm. The enzyme catalyses dUMP + (6R)-5,10-methylene-5,6,7,8-tetrahydrofolate = 7,8-dihydrofolate + dTMP. The protein operates within pyrimidine metabolism; dTTP biosynthesis. Functionally, catalyzes the reductive methylation of 2'-deoxyuridine-5'-monophosphate (dUMP) to 2'-deoxythymidine-5'-monophosphate (dTMP) while utilizing 5,10-methylenetetrahydrofolate (mTHF) as the methyl donor and reductant in the reaction, yielding dihydrofolate (DHF) as a by-product. This enzymatic reaction provides an intracellular de novo source of dTMP, an essential precursor for DNA biosynthesis. The chain is Thymidylate synthase from Symbiobacterium thermophilum (strain DSM 24528 / JCM 14929 / IAM 14863 / T).